A 139-amino-acid chain; its full sequence is Myosin light chain kinase, smooth muscle (139 aa).

The disordered stretch occupies residues 48-97 (APTGENAKAPEMKARRPKSSLPPVLGTESDATVKKKPAPKTPPKAAMPPQ).

It belongs to the protein kinase superfamily. CAMK Ser/Thr protein kinase family. As to quaternary structure, interacts with SVIL. In terms of processing, the C-terminus is deglutamylated by AGTPBP1/CCP1, AGBL1/CCP4 and AGBL4/CCP6, leading to the formation of Myosin light chain kinase, smooth muscle, deglutamylated form. The consequences of C-terminal deglutamylation are unknown.

It carries out the reaction L-seryl-[myosin light chain] + ATP = O-phospho-L-seryl-[myosin light chain] + ADP + H(+). It catalyses the reaction L-threonyl-[myosin light chain] + ATP = O-phospho-L-threonyl-[myosin light chain] + ADP + H(+). Phosphorylates a specific serine in the N-terminus of a myosin light chain. Also regulates actin-myosin interaction through a non-kinase activity. The chain is Myosin light chain kinase, smooth muscle (MYLK) from Sus scrofa (Pig).